A 411-amino-acid polypeptide reads, in one-letter code: Acetylornithine aminotransferase (411 aa).

Residues 107-108 and Phe-141 each bind pyridoxal 5'-phosphate; that span reads GT. Arg-144 is a N(2)-acetyl-L-ornithine binding site. Position 227–230 (227–230) interacts with pyridoxal 5'-phosphate; that stretch reads DEIQ. N6-(pyridoxal phosphate)lysine is present on Lys-256. Residue Thr-284 participates in N(2)-acetyl-L-ornithine binding. Residue Thr-285 coordinates pyridoxal 5'-phosphate.

The protein belongs to the class-III pyridoxal-phosphate-dependent aminotransferase family. ArgD subfamily. As to quaternary structure, homodimer. Pyridoxal 5'-phosphate serves as cofactor.

The protein resides in the cytoplasm. The enzyme catalyses N(2)-acetyl-L-ornithine + 2-oxoglutarate = N-acetyl-L-glutamate 5-semialdehyde + L-glutamate. The protein operates within amino-acid biosynthesis; L-arginine biosynthesis; N(2)-acetyl-L-ornithine from L-glutamate: step 4/4. In Xylella fastidiosa (strain 9a5c), this protein is Acetylornithine aminotransferase.